A 391-amino-acid polypeptide reads, in one-letter code: Phosphoglycerate kinase (391 aa).

Residues 21–23 (DLN), Arg36, 59–62 (HLGR), Arg113, and Arg146 contribute to the substrate site. ATP contacts are provided by residues Lys197, Glu319, and 345 to 348 (GGDT).

Belongs to the phosphoglycerate kinase family. In terms of assembly, monomer.

Its subcellular location is the cytoplasm. It carries out the reaction (2R)-3-phosphoglycerate + ATP = (2R)-3-phospho-glyceroyl phosphate + ADP. The protein operates within carbohydrate degradation; glycolysis; pyruvate from D-glyceraldehyde 3-phosphate: step 2/5. The chain is Phosphoglycerate kinase from Shewanella baltica (strain OS185).